The following is a 145-amino-acid chain: Large ribosomal subunit protein uL16 (145 aa).

It belongs to the universal ribosomal protein uL16 family. As to quaternary structure, part of the 50S ribosomal subunit.

Binds 23S rRNA and is also seen to make contacts with the A and possibly P site tRNAs. This chain is Large ribosomal subunit protein uL16, found in Desulfitobacterium hafniense (strain DSM 10664 / DCB-2).